The chain runs to 549 residues: Exodeoxyribonuclease 7 large subunit (549 aa).

The interval 511-549 (LVATDPPVDPKPTRKPVQKSSSPKPSSRKPKKSQQEDLF) is disordered.

The protein belongs to the XseA family. In terms of assembly, heterooligomer composed of large and small subunits.

The protein resides in the cytoplasm. The enzyme catalyses Exonucleolytic cleavage in either 5'- to 3'- or 3'- to 5'-direction to yield nucleoside 5'-phosphates.. Bidirectionally degrades single-stranded DNA into large acid-insoluble oligonucleotides, which are then degraded further into small acid-soluble oligonucleotides. This is Exodeoxyribonuclease 7 large subunit from Beijerinckia indica subsp. indica (strain ATCC 9039 / DSM 1715 / NCIMB 8712).